The chain runs to 289 residues: Rhodopsin (289 aa).

Over 1–7 (YLVSPAA) the chain is Extracellular. A helical membrane pass occupies residues 8 to 32 (YAALGAYMFLLILVGFPVNFLTLYV). Residues 33-44 (TLDHKKLRTPLN) lie on the Cytoplasmic side of the membrane. Residues 45 to 67 (YILLNLAVADLFMVLGGFTTTMY) traverse the membrane as a helical segment. Over 68–81 (TSMHGYFVLGRLGC) the chain is Extracellular. Cys81 and Cys158 are disulfide-bonded. A helical membrane pass occupies residues 82 to 104 (NLEGFFATLGGEIALWSLVVLAI). The short motif at 105–107 (ERW) is the 'Ionic lock' involved in activated form stabilization element. The Cytoplasmic portion of the chain corresponds to 105–123 (ERWIVVCKPISNFRFTEDH). Residues 124–144 (AIMGLAFSWVMALTCAVPPLV) form a helical membrane-spanning segment. The Extracellular portion of the chain corresponds to 145-173 (GWSRYIPEGMQCSCGVDYYTRAEGFNTES). The helical transmembrane segment at 174–195 (FVLYMFTVHFLIPLSVIFFCYG) threads the bilayer. At 196–223 (RLLCAVKEAAAAQQESETTQRAEKEVSR) the chain is on the cytoplasmic side. Residues 224 to 245 (MVVLMVIGFLVCWLPYASVAWW) traverse the membrane as a helical segment. Residues 246 to 257 (IFCNQGSEFGPI) lie on the Extracellular side of the membrane. A helical transmembrane segment spans residues 258 to 279 (FMTLPAFFAKTSAIYNPLIYIC). An N6-(retinylidene)lysine modification is found at Lys267. The Cytoplasmic portion of the chain corresponds to 280-289 (MNKQFRHCMI).

Belongs to the G-protein coupled receptor 1 family. Opsin subfamily. In terms of processing, phosphorylated on some or all of the serine and threonine residues present in the C-terminal region. Post-translationally, contains one covalently linked retinal chromophore.

The protein resides in the membrane. The protein localises to the cell projection. Its subcellular location is the cilium. It is found in the photoreceptor outer segment. Photoreceptor required for image-forming vision at low light intensity. While most salt water fish species use retinal as chromophore, most freshwater fish use 3-dehydroretinal, or a mixture of retinal and 3-dehydroretinal. Light-induced isomerization of 11-cis to all-trans retinal triggers a conformational change that activates signaling via G-proteins. Subsequent receptor phosphorylation mediates displacement of the bound G-protein alpha subunit by arrestin and terminates signaling. The sequence is that of Rhodopsin (rho) from Procottus jeittelesii (Red sculpin).